The following is a 619-amino-acid chain: ESX-2 secretion system protein EccA2 (619 aa).

An ATP-binding site is contributed by 373-380 (GPPGTGKT).

This sequence belongs to the CbxX/CfxQ family. Part of the ESX-2 / type VII secretion system (T7SS), which is composed of cytosolic and membrane components.

The protein localises to the cytoplasm. Its function is as follows. Part of an ESX-2 / type VII specialized secretion system (T7SS), which exports several proteins. May have ATPase activity and might provide energy for the export of ESX-2 substrates. In Mycobacterium bovis (strain ATCC BAA-935 / AF2122/97), this protein is ESX-2 secretion system protein EccA2.